We begin with the raw amino-acid sequence, 507 residues long: ATP synthase subunit alpha, mitochondrial (507 aa).

Residue 171–178 participates in ATP binding; that stretch reads GDRQTGKT.

Belongs to the ATPase alpha/beta chains family. As to quaternary structure, F-type ATPases have 2 components, CF(1) - the catalytic core - and CF(0) - the membrane proton channel. CF(1) has five subunits: alpha(3), beta(3), gamma(1), delta(1), epsilon(1). CF(0) has three main subunits: a, b and c.

The protein localises to the mitochondrion. It is found in the mitochondrion inner membrane. Its function is as follows. Mitochondrial membrane ATP synthase (F(1)F(0) ATP synthase or Complex V) produces ATP from ADP in the presence of a proton gradient across the membrane which is generated by electron transport complexes of the respiratory chain. F-type ATPases consist of two structural domains, F(1) - containing the extramembraneous catalytic core, and F(0) - containing the membrane proton channel, linked together by a central stalk and a peripheral stalk. During catalysis, ATP synthesis in the catalytic domain of F(1) is coupled via a rotary mechanism of the central stalk subunits to proton translocation. Subunits alpha and beta form the catalytic core in F(1). Rotation of the central stalk against the surrounding alpha(3)beta(3) subunits leads to hydrolysis of ATP in three separate catalytic sites on the beta subunits. Subunit alpha does not bear the catalytic high-affinity ATP-binding sites. This is ATP synthase subunit alpha, mitochondrial (ATPA) from Brassica napus (Rape).